Here is a 506-residue protein sequence, read N- to C-terminus: RNA-splicing ligase RtcB homolog (506 aa).

Positions 120, 123, 228, 260, and 354 each coordinate Mn(2+). 227-231 (NHYAE) is a GMP binding site. Residues 354–355 (HN), 403–406 (GGSM), Ser410, 429–432 (HGAG), and Lys505 contribute to the GMP site. His429 (GMP-histidine intermediate) is an active-site residue.

It belongs to the RtcB family. Catalytic component of the tRNA-splicing ligase complex. Requires Mn(2+) as cofactor.

It catalyses the reaction a 3'-end 3'-phospho-ribonucleotide-RNA + a 5'-end dephospho-ribonucleoside-RNA + GTP = a ribonucleotidyl-ribonucleotide-RNA + GMP + diphosphate. The enzyme catalyses a 3'-end 2',3'-cyclophospho-ribonucleotide-RNA + a 5'-end dephospho-ribonucleoside-RNA + GTP + H2O = a ribonucleotidyl-ribonucleotide-RNA + GMP + diphosphate + H(+). Catalytic subunit of the tRNA-splicing ligase complex that acts by directly joining spliced tRNA halves to mature-sized tRNAs by incorporating the precursor-derived splice junction phosphate into the mature tRNA as a canonical 3',5'-phosphodiester. May act as an RNA ligase with broad substrate specificity, and may function toward other RNAs. This is RNA-splicing ligase RtcB homolog from Aedes aegypti (Yellowfever mosquito).